Here is an 89-residue protein sequence, read N- to C-terminus: Phosphoribulokinase, chloroplastic (89 aa).

Residues 1–22 (LTSVFGGAAEPPRGGNPDSNTL) are disordered.

Belongs to the phosphoribulokinase family.

It localises to the plastid. Its subcellular location is the chloroplast. The enzyme catalyses D-ribulose 5-phosphate + ATP = D-ribulose 1,5-bisphosphate + ADP + H(+). Its pathway is carbohydrate biosynthesis; Calvin cycle. Its activity is regulated as follows. Light regulated via thioredoxin by reversible oxidation/reduction of sulfhydryl/disulfide groups. The polypeptide is Phosphoribulokinase, chloroplastic (Vitis sp. (Grape)).